A 397-amino-acid polypeptide reads, in one-letter code: Odorant receptor 85a (397 aa).

The Cytoplasmic portion of the chain corresponds to 1–46; sequence MIFKYIQEPVLGSLFRSRDSLIYLNRSIDQMGWRLPPRTKPYWWLY. A helical membrane pass occupies residues 47 to 67; sequence YIWTLVVIVLVFIFIPYGLIM. Residues 68 to 83 are Extracellular-facing; that stretch reads TGIKEFKNFTTTDLFT. N-linked (GlcNAc...) asparagine glycosylation is present at asparagine 75. Residues 84–104 form a helical membrane-spanning segment; the sequence is YVQVPVNTNASIMKGIIVLFM. The Cytoplasmic segment spans residues 105-142; the sequence is RRRFSRAQKMMDAMDIRCTKMEEKVQVHRAAALCNRVV. A helical transmembrane segment spans residues 143–163; it reads VIYHCIYFGYLSMALTGALVI. The Extracellular segment spans residues 164–192; it reads GKTPFCLYNPLVNPDDHFYLATAIESVTM. The helical transmembrane segment at 193–213 threads the bilayer; the sequence is AGIILANLILDVYPIIYVVVL. Over 214–262 the chain is Cytoplasmic; sequence RIHMELLSERIKTLRTDVEKGDDQHYAELVECVKDHKLIVEYGNTLRPM. Residues 263-283 traverse the membrane as a helical segment; sequence ISATMFIQLLSVGLLLGLAAV. Over 284-294 the chain is Extracellular; the sequence is SMQFYNTVMER. The helical transmembrane segment at 295 to 315 threads the bilayer; it reads VVSGVYTIAILSQTFPFCYVC. Over 316 to 347 the chain is Cytoplasmic; it reads EQLSSDCESLTNTLFHSKWIGAERRYRTTMLY. The helical transmembrane segment at 348-368 threads the bilayer; sequence FIHNVQQSILFTAGGIFPICL. Residues 369–397 lie on the Extracellular side of the membrane; it reads NTNIKMAKFAFSVVTIVNEMDLAEKLRRE.

The protein belongs to the insect chemoreceptor superfamily. Heteromeric odorant receptor channel (TC 1.A.69) family. Or2a subfamily. In terms of assembly, interacts with Orco. Complexes exist early in the endomembrane system in olfactory sensory neurons (OSNs), coupling these complexes to the conserved ciliary trafficking pathway. Expressed in olfactory sensory neurons in the antenna.

Its subcellular location is the cell membrane. Functionally, odorant receptor which mediates acceptance or avoidance behavior, depending on its substrates. The odorant receptor repertoire encodes a large collection of odor stimuli that vary widely in identity, intensity, and duration. May form a complex with Orco to form odorant-sensing units, providing sensitive and prolonged odorant signaling and calcium permeability. This chain is Odorant receptor 85a (Or85a), found in Drosophila melanogaster (Fruit fly).